Reading from the N-terminus, the 131-residue chain is NADH-quinone oxidoreductase subunit I 2 (131 aa).

4Fe-4S ferredoxin-type domains lie at 42 to 71 (LKVS…VEAG) and 81 to 110 (ERYE…MTGE). Residues Cys-51, Cys-54, Cys-57, Cys-61, Cys-90, Cys-93, Cys-96, and Cys-100 each coordinate [4Fe-4S] cluster.

It belongs to the complex I 23 kDa subunit family. NDH-1 is composed of 14 different subunits. Subunits NuoA, H, J, K, L, M, N constitute the membrane sector of the complex. [4Fe-4S] cluster serves as cofactor.

It is found in the cell inner membrane. It carries out the reaction a quinone + NADH + 5 H(+)(in) = a quinol + NAD(+) + 4 H(+)(out). Functionally, NDH-1 shuttles electrons from NADH, via FMN and iron-sulfur (Fe-S) centers, to quinones in the respiratory chain. The immediate electron acceptor for the enzyme in this species is believed to be ubiquinone. Couples the redox reaction to proton translocation (for every two electrons transferred, four hydrogen ions are translocated across the cytoplasmic membrane), and thus conserves the redox energy in a proton gradient. The protein is NADH-quinone oxidoreductase subunit I 2 of Geobacter metallireducens (strain ATCC 53774 / DSM 7210 / GS-15).